We begin with the raw amino-acid sequence, 861 residues long: Rod cGMP-specific 3',5'-cyclic phosphodiesterase subunit alpha (861 aa).

At Gly-2 the chain carries N-acetylglycine. GAF domains are found at residues 73-222 (QAER…NLIM) and 254-431 (DIER…GWSV). Residues 483–816 (EEEELAEILQ…KEWKALADEY (334 aa)) form the PDEase domain. His-559 acts as the Proton donor in catalysis. Positions 563, 599, 600, and 720 each coordinate a divalent metal cation. Positions 821–861 (KALEEEKQKQQTAKQGAAGDQPGGNPSPAGGAPASKSCCIQ) are disordered. Low complexity predominate over residues 830–861 (QQTAKQGAAGDQPGGNPSPAGGAPASKSCCIQ). Cys-858 is modified (cysteine methyl ester). Cys-858 carries S-farnesyl cysteine lipidation. The propeptide at 859 to 861 (CIQ) is removed in mature form.

Belongs to the cyclic nucleotide phosphodiesterase family. Oligomer composed of two catalytic chains (alpha and beta), an inhibitory chain (gamma) and the delta chain. A divalent metal cation serves as cofactor.

The protein localises to the cell membrane. It localises to the cell projection. The protein resides in the cilium. It is found in the photoreceptor outer segment. It carries out the reaction 3',5'-cyclic GMP + H2O = GMP + H(+). Its function is as follows. Rod-specific cGMP phosphodiesterase that catalyzes the hydrolysis of 3',5'-cyclic GMP. This protein participates in processes of transmission and amplification of the visual signal. The chain is Rod cGMP-specific 3',5'-cyclic phosphodiesterase subunit alpha from Canis lupus familiaris (Dog).